Consider the following 305-residue polypeptide: ADP,ATP carrier protein (305 aa).

3 Solcar repeats span residues 8 to 101 (SNFA…IKAM), 112 to 204 (KWFA…LKPL), and 212 to 298 (NSFL…LQVI). A run of 5 helical transmembrane segments spans residues 10–37 (FAID…VKLL), 78–102 (TANV…KAMF), 110–130 (YAKW…LSLL), 180–201 (FLPS…YDSL), and 215–235 (LASF…SYPL). Positions 83 and 95 each coordinate ADP. Arg-239 contacts ADP. The tract at residues 239 to 244 (RRRMMM) is important for transport activity. Positions 239–244 (RRRMMM) match the Nucleotide carrier signature motif motif. The helical transmembrane segment at 275-295 (CGANILRGVAGAGVISMYDQL) threads the bilayer.

Belongs to the mitochondrial carrier (TC 2.A.29) family. As to quaternary structure, monomer.

Its subcellular location is the mitochondrion inner membrane. It carries out the reaction ADP(in) + ATP(out) = ADP(out) + ATP(in). With respect to regulation, the matrix-open state (m-state) is inhibited by the membrane-permeable bongkrekic acid (BKA). The cytoplasmic-open state (c-state) is inhibited by the membrane-impermeable toxic inhibitor carboxyatractyloside (CATR). Functionally, ADP:ATP antiporter that mediates import of ADP into the mitochondrial matrix for ATP synthesis, and export of ATP out to fuel the cell. Cycles between the cytoplasmic-open state (c-state) and the matrix-open state (m-state): operates by the alternating access mechanism with a single substrate-binding site intermittently exposed to either the cytosolic (c-state) or matrix (m-state) side of the inner mitochondrial membrane. In Kluyveromyces lactis (strain ATCC 8585 / CBS 2359 / DSM 70799 / NBRC 1267 / NRRL Y-1140 / WM37) (Yeast), this protein is ADP,ATP carrier protein (AAC).